The sequence spans 432 residues: Myb family transcription factor EFM (432 aa).

The stretch at 36–81 forms a coiled coil; it reads LEDLLSRLEQERLKIDAFKRELPLCMQLLNNAVEVYKQQLEAYRAN. Polar residues-rich tracts occupy residues 123–139 and 187–197; these read SQSE…TDQS and SPTNEHTNGQD. A disordered region spans residues 123-237; the sequence is SQSETKPKNI…SQSNRKARRC (115 aa). Over residues 201–231 the composition is skewed to low complexity; the sequence is ESMINNDNNYNNNNNNNSNSNGVSSTTSQSN. One can recognise an HTH myb-type domain in the interval 230–290; that stretch reads SNRKARRCWS…HLQKYRLHTR (61 aa). The H-T-H motif DNA-binding region spans 261–286; that stretch reads PKQIRELMKVDGLTNDEVKSHLQKYR. Residues 354 to 412 form a disordered region; that stretch reads FYTTPPPPQPLHHHHFQTFNGSSGGTASTDSTHHQVTDSPTVEGKSPESGGGERKGLAA.

In terms of assembly, interacts with JMJ30, but not with SVP, FLC or CO. In terms of tissue distribution, specifically expressed in vascular tissues of cotyledons, rosette leaves and cauline leaves. Not detected in the vegetative shoot apical meristem.

The protein resides in the nucleus. Transcription factor acting as a flowering repressor, directly repressing FT expression in a dosage-dependent manner in the leaf vasculature. The sequence is that of Myb family transcription factor EFM from Arabidopsis thaliana (Mouse-ear cress).